The sequence spans 360 residues: Membrane-bound lytic murein transglycosylase C (360 aa).

A signal peptide spans 1 to 16; sequence MKKYLALALIAPLLVS. The N-palmitoyl cysteine moiety is linked to residue cysteine 17. The S-diacylglycerol cysteine moiety is linked to residue cysteine 17.

The protein belongs to the transglycosylase Slt family.

It is found in the cell outer membrane. The enzyme catalyses Exolytic cleavage of the (1-&gt;4)-beta-glycosidic linkage between N-acetylmuramic acid (MurNAc) and N-acetylglucosamine (GlcNAc) residues in peptidoglycan, from either the reducing or the non-reducing ends of the peptidoglycan chains, with concomitant formation of a 1,6-anhydrobond in the MurNAc residue.. Its function is as follows. Murein-degrading enzyme. May play a role in recycling of muropeptides during cell elongation and/or cell division. In Klebsiella pneumoniae (strain 342), this protein is Membrane-bound lytic murein transglycosylase C.